We begin with the raw amino-acid sequence, 104 residues long: Ubiquitin-related modifier 1 homolog (104 aa).

The residue at position 104 (G104) is a 1-thioglycine. G104 participates in a covalent cross-link: Glycyl lysine isopeptide (Gly-Lys) (interchain with K-? in acceptor proteins).

The protein belongs to the URM1 family. Interacts with cer. C-terminal thiocarboxylation occurs in 2 steps, it is first acyl-adenylated (-COAMP) via the hesA/moeB/thiF part of the MOCS3 homolog, then thiocarboxylated (-COSH) via the rhodanese domain of the MOCS3 homolog.

The protein resides in the cytoplasm. It functions in the pathway tRNA modification; 5-methoxycarbonylmethyl-2-thiouridine-tRNA biosynthesis. In terms of biological role, acts as a sulfur carrier required for 2-thiolation of mcm(5)S(2)U at tRNA wobble positions of cytosolic tRNA(Lys), tRNA(Glu) and tRNA(Gln). Serves as sulfur donor in tRNA 2-thiolation reaction by being thiocarboxylated (-COSH) at its C-terminus by MOCS3. The sulfur is then transferred to tRNA to form 2-thiolation of mcm(5)S(2)U. Also acts as a ubiquitin-like protein (UBL) that is covalently conjugated via an isopeptide bond to lysine residues of target proteins such as Prx2/Jafrac1, Ciao1, Eip71CD and GILT1. The thiocarboxylated form serves as substrate for conjugation and oxidative stress specifically induces the formation of UBL-protein conjugates. The polypeptide is Ubiquitin-related modifier 1 homolog (Drosophila grimshawi (Hawaiian fruit fly)).